Here is a 717-residue protein sequence, read N- to C-terminus: ATP-dependent RNA helicase homolog DQX1 (717 aa).

The Helicase ATP-binding domain maps to 57-225 (QLESNPTGVV…WGNPPIVHIP (169 aa)). Residue 70–77 (GEPGSGKS) participates in ATP binding. Residues 170–173 (DEAQ) carry the DEAQ box motif. One can recognise a Helicase C-terminal domain in the interval 248 to 447 (ACQAVLELCR…ALMQALEDLD (200 aa)). Positions 694-717 (GMADSTAGSKSSSAQEFRDPCVLQ) are disordered. The segment covering 699–708 (TAGSKSSSAQ) has biased composition (polar residues).

The protein localises to the nucleus. In terms of biological role, might be involved in RNA metabolism; it is missing helicase motif III and may not have helicase activity. The protein is ATP-dependent RNA helicase homolog DQX1 (DQX1) of Homo sapiens (Human).